A 137-amino-acid polypeptide reads, in one-letter code: Fluoride-specific ion channel FluC 1 (137 aa).

The next 4 membrane-spanning stretches (helical) occupy residues 4–24 (LIYI…YYLG), 37–57 (LATL…TTYI), 67–87 (VITG…TFSV), and 100–120 (IAFL…GLGY). Residues glycine 77 and threonine 80 each contribute to the Na(+) site.

It belongs to the fluoride channel Fluc/FEX (TC 1.A.43) family.

It is found in the cell membrane. It carries out the reaction fluoride(in) = fluoride(out). With respect to regulation, na(+) is not transported, but it plays an essential structural role and its presence is essential for fluoride channel function. Fluoride-specific ion channel. Important for reducing fluoride concentration in the cell, thus reducing its toxicity. The chain is Fluoride-specific ion channel FluC 1 from Bacillus thuringiensis subsp. konkukian (strain 97-27).